The chain runs to 118 residues: Large ribosomal subunit protein uL18 (118 aa).

The protein belongs to the universal ribosomal protein uL18 family. Part of the 50S ribosomal subunit; part of the 5S rRNA/L5/L18/L25 subcomplex. Contacts the 5S and 23S rRNAs.

Functionally, this is one of the proteins that bind and probably mediate the attachment of the 5S RNA into the large ribosomal subunit, where it forms part of the central protuberance. This is Large ribosomal subunit protein uL18 from Sulfurimonas denitrificans (strain ATCC 33889 / DSM 1251) (Thiomicrospira denitrificans (strain ATCC 33889 / DSM 1251)).